Here is an 832-residue protein sequence, read N- to C-terminus: Protein P (832 aa).

The segment at methionine 1–glutamine 177 is terminal protein domain (TP). The segment at glutamate 178–leucine 335 is spacer. The span at lysine 208 to serine 224 shows a compositional bias: low complexity. The tract at residues lysine 208 to arginine 241 is disordered. Residues glutamate 336 to glutamine 679 are polymerase/reverse transcriptase domain (RT). A Reverse transcriptase domain is found at glutamate 346–isoleucine 589. The Mg(2+) site is built by aspartate 418, aspartate 540, and aspartate 541.

Belongs to the hepadnaviridae P protein family.

It carries out the reaction DNA(n) + a 2'-deoxyribonucleoside 5'-triphosphate = DNA(n+1) + diphosphate. It catalyses the reaction Endonucleolytic cleavage to 5'-phosphomonoester.. Activated by host HSP70 and HSP40 in vitro to be able to bind the epsilon loop of the pgRNA. Because deletion of the RNase H region renders the protein partly chaperone-independent, the chaperones may be needed indirectly to relieve occlusion of the RNA-binding site by this domain. Inhibited by several reverse-transcriptase inhibitors: Lamivudine, Adefovir and Entecavir. Functionally, multifunctional enzyme that converts the viral RNA genome into dsDNA in viral cytoplasmic capsids. This enzyme displays a DNA polymerase activity that can copy either DNA or RNA templates, and a ribonuclease H (RNase H) activity that cleaves the RNA strand of RNA-DNA heteroduplexes in a partially processive 3'- to 5'-endonucleasic mode. Neo-synthesized pregenomic RNA (pgRNA) are encapsidated together with the P protein, and reverse-transcribed inside the nucleocapsid. Initiation of reverse-transcription occurs first by binding the epsilon loop on the pgRNA genome, and is initiated by protein priming, thereby the 5'-end of (-)DNA is covalently linked to P protein. Partial (+)DNA is synthesized from the (-)DNA template and generates the relaxed circular DNA (RC-DNA) genome. After budding and infection, the RC-DNA migrates in the nucleus, and is converted into a plasmid-like covalently closed circular DNA (cccDNA). The activity of P protein does not seem to be necessary for cccDNA generation, and is presumably released from (+)DNA by host nuclear DNA repair machinery. The polypeptide is Protein P (Gibbon hepatitis B virus subtype ayw3q (isolate Hope) (HBVgbn)).